A 152-amino-acid polypeptide reads, in one-letter code: Lipoprotein signal peptidase (152 aa).

Helical transmembrane passes span 55-75 and 85-105; these read NKMWFFYIITVVFVVFIVFYM and LGISLGLILGGAMGNFIDRVF. Active-site residues include D111 and D129. Residues 124 to 144 traverse the membrane as a helical segment; it reads VFNIADSALCIGVVLIIIQTL.

It belongs to the peptidase A8 family.

The protein resides in the cell membrane. The catalysed reaction is Release of signal peptides from bacterial membrane prolipoproteins. Hydrolyzes -Xaa-Yaa-Zaa-|-(S,diacylglyceryl)Cys-, in which Xaa is hydrophobic (preferably Leu), and Yaa (Ala or Ser) and Zaa (Gly or Ala) have small, neutral side chains.. Its pathway is protein modification; lipoprotein biosynthesis (signal peptide cleavage). Functionally, this protein specifically catalyzes the removal of signal peptides from prolipoproteins. This chain is Lipoprotein signal peptidase, found in Bacillus cereus (strain B4264).